The sequence spans 335 residues: uncharacterized protein (335 aa).

This is an uncharacterized protein from Escherichia coli (strain K12).